A 383-amino-acid polypeptide reads, in one-letter code: 8-amino-7-oxononanoate synthase (383 aa).

Arginine 23 is a substrate binding site. Pyridoxal 5'-phosphate is bound at residue 110-111 (GF). Residue histidine 135 participates in substrate binding. 3 residues coordinate pyridoxal 5'-phosphate: serine 181, histidine 209, and threonine 235. Lysine 238 is subject to N6-(pyridoxal phosphate)lysine. Threonine 351 lines the substrate pocket.

This sequence belongs to the class-II pyridoxal-phosphate-dependent aminotransferase family. BioF subfamily. In terms of assembly, homodimer. It depends on pyridoxal 5'-phosphate as a cofactor.

The catalysed reaction is 6-carboxyhexanoyl-[ACP] + L-alanine + H(+) = (8S)-8-amino-7-oxononanoate + holo-[ACP] + CO2. The protein operates within cofactor biosynthesis; biotin biosynthesis. Its function is as follows. Catalyzes the decarboxylative condensation of pimeloyl-[acyl-carrier protein] and L-alanine to produce 8-amino-7-oxononanoate (AON), [acyl-carrier protein], and carbon dioxide. The chain is 8-amino-7-oxononanoate synthase from Aliivibrio fischeri (strain ATCC 700601 / ES114) (Vibrio fischeri).